A 183-amino-acid chain; its full sequence is Ankyrin repeat domain-containing protein 39 (183 aa).

4 ANK repeats span residues 30–59 (DFER…DPSQ), 63–92 (AGYT…KCDA), 96–125 (GGAT…NPRV), and 129–158 (DGMT…ALKA). S153 bears the Phosphoserine mark.

The protein belongs to the ANKRD39 family.

The polypeptide is Ankyrin repeat domain-containing protein 39 (ANKRD39) (Homo sapiens (Human)).